The primary structure comprises 180 residues: Shikimate kinase (180 aa).

15–20 contacts ATP; the sequence is GAGKTT. A Mg(2+)-binding site is contributed by T19. Substrate contacts are provided by D37, R61, and G83. R121 is a binding site for ATP. Substrate is bound at residue R140.

The protein belongs to the shikimate kinase family. Monomer. It depends on Mg(2+) as a cofactor.

The protein resides in the cytoplasm. The catalysed reaction is shikimate + ATP = 3-phosphoshikimate + ADP + H(+). Its pathway is metabolic intermediate biosynthesis; chorismate biosynthesis; chorismate from D-erythrose 4-phosphate and phosphoenolpyruvate: step 5/7. Its function is as follows. Catalyzes the specific phosphorylation of the 3-hydroxyl group of shikimic acid using ATP as a cosubstrate. The sequence is that of Shikimate kinase from Psychrobacter sp. (strain PRwf-1).